Reading from the N-terminus, the 364-residue chain is Probable UDP-arabinopyranose mutase 4 (364 aa).

Positions 106-108 (DDD) match the DXD motif motif. Arg-154 is a glycosylation site (N-linked (Glc...) arginine).

The protein belongs to the RGP family. As to quaternary structure, heteromers with RGP1 and RGP2. Mn(2+) serves as cofactor. The cofactor is Mg(2+). Post-translationally, reversibly glycosylated in vitro by UDP-glucose, UDP-xylose and UDP-galactose, but not UDP-mannose. In terms of tissue distribution, specifically expressed in developing seeds.

It is found in the cytoplasm. The protein localises to the cytosol. It localises to the golgi apparatus. The catalysed reaction is UDP-beta-L-arabinofuranose = UDP-beta-L-arabinopyranose. Functionally, probable UDP-L-arabinose mutase involved in the biosynthesis of cell wall non-cellulosic polysaccharides. The sequence is that of Probable UDP-arabinopyranose mutase 4 from Arabidopsis thaliana (Mouse-ear cress).